Here is a 196-residue protein sequence, read N- to C-terminus: Heat shock protein beta-8 (196 aa).

Residues 1–28 (MADGQLPFPCSYPSRLRRDPFRDSPLSS) are disordered. Residues Ser24 and Ser57 each carry the phosphoserine modification. Position 63 is a phosphothreonine (Thr63). An asymmetric dimethylarginine mark is found at Arg71 and Arg78. Residues 74–185 (TATARFGVPA…PFGESSFNNE (112 aa)) form the sHSP domain. Residues 176–196 (PFGESSFNNELPQDNQEVTCS) form a disordered region. A compositionally biased stretch (polar residues) spans 178–196 (GESSFNNELPQDNQEVTCS).

It belongs to the small heat shock protein (HSP20) family. As to quaternary structure, monomer. Forms a ternary complex with BAG3 and HSPA1A. Component of the chaperone-assisted selective autophagy (CASA) complex consisting of BAG3, HSPA8/HSC70, HSPB8 and STUB1/CHIP. Interacts with HSPB1. Interacts with DNAJB6. Interacts with BAG3. Phosphorylated.

Its subcellular location is the cytoplasm. It is found in the nucleus. Its function is as follows. Involved in the chaperone-assisted selective autophagy (CASA), a crucial process for protein quality control, particularly in mechanical strained cells and tissues such as muscle. Displays temperature-dependent chaperone activity. The chain is Heat shock protein beta-8 (Hspb8) from Rattus norvegicus (Rat).